We begin with the raw amino-acid sequence, 257 residues long: tRNA pseudouridine synthase A (257 aa).

Aspartate 53 functions as the Nucleophile in the catalytic mechanism. Tyrosine 111 contributes to the substrate binding site.

It belongs to the tRNA pseudouridine synthase TruA family. In terms of assembly, homodimer.

The enzyme catalyses uridine(38/39/40) in tRNA = pseudouridine(38/39/40) in tRNA. In terms of biological role, formation of pseudouridine at positions 38, 39 and 40 in the anticodon stem and loop of transfer RNAs. In Xanthomonas euvesicatoria pv. vesicatoria (strain 85-10) (Xanthomonas campestris pv. vesicatoria), this protein is tRNA pseudouridine synthase A.